A 453-amino-acid polypeptide reads, in one-letter code: MASKVISATIRRTLTKPHGTFSRCRYLSTAAAATEVNYEDESIMMKGVRISGRPLYLDMQATTPIDPRVFDAMNASQIHEYGNPHSRTHLYGWEAENAVENARNQVAKLIEASPKEIVFVSGATEANNMAVKGVMHFYKDTKKHVITTQTEHKCVLDSCRHLQQEGFEVTYLPVKTDGLVDLEMLREAIRPDTGLVSIMAVNNEIGVVQPMEEIGMICKEHNVPFHTDAAQAIGKIPVDVKKWNVALMSMSAHKIYGPKGVGALYVRRRPRIRLEPLMNGGGQERGLRSGTGATQQIVGFGAACELAMKEMEYDEKWIKGLQERLLNGVREKLDGVVVNGSMDSRYVGNLNLSFAYVEGESLLMGLKEVAVSSGSACTSASLEPSYVLRALGVDEDMAHTSIRFGIGRFTTKEEIDKAVELTVKQVEKLREMSPLYEMVKEGIDIKNIQWSQH.

Residues 1–34 (MASKVISATIRRTLTKPHGTFSRCRYLSTAAAAT) constitute a mitochondrion transit peptide. Pyridoxal 5'-phosphate-binding positions include 123–124 (AT), Asn-203, Gln-231, and 251–253 (SAH). An N6-(pyridoxal phosphate)lysine modification is found at Lys-254. Thr-291 provides a ligand contact to pyridoxal 5'-phosphate. The active-site Cysteine persulfide intermediate is Cys-377. [2Fe-2S] cluster is bound at residue Cys-377.

Belongs to the class-V pyridoxal-phosphate-dependent aminotransferase family. NifS/IscS subfamily. Interacts with FH. Interacts with SUFE1. Pyridoxal 5'-phosphate is required as a cofactor.

The protein resides in the mitochondrion. It catalyses the reaction (sulfur carrier)-H + L-cysteine = (sulfur carrier)-SH + L-alanine. Its activity is regulated as follows. Threefold increase in the catalytic activity in the presence of FH (frataxin). 30-fold increase in the catalytic activity in the presence of SUFE1. Catalyzes the removal of elemental sulfur from cysteine to produce alanine. Supplies the inorganic sulfur for iron-sulfur (Fe-S) clusters. The chain is Cysteine desulfurase, mitochondrial from Arabidopsis thaliana (Mouse-ear cress).